We begin with the raw amino-acid sequence, 113 residues long: Nucleoid-associated protein EUBREC_0329 (113 aa).

Gly residues predominate over residues 1–12 (MARRGGFPGGMP). The interval 1-45 (MARRGGFPGGMPGNMNNLMKQAQKMQRQMEEAQKQLEDAEVTAKA) is disordered. Residues 27 to 37 (RQMEEAQKQLE) are compositionally biased toward basic and acidic residues.

This sequence belongs to the YbaB/EbfC family. In terms of assembly, homodimer.

It localises to the cytoplasm. The protein resides in the nucleoid. Functionally, binds to DNA and alters its conformation. May be involved in regulation of gene expression, nucleoid organization and DNA protection. The protein is Nucleoid-associated protein EUBREC_0329 of Agathobacter rectalis (strain ATCC 33656 / DSM 3377 / JCM 17463 / KCTC 5835 / VPI 0990) (Eubacterium rectale).